Consider the following 299-residue polypeptide: ATP phosphoribosyltransferase (299 aa).

The protein belongs to the ATP phosphoribosyltransferase family. Long subfamily. Requires Mg(2+) as cofactor.

The protein localises to the cytoplasm. The enzyme catalyses 1-(5-phospho-beta-D-ribosyl)-ATP + diphosphate = 5-phospho-alpha-D-ribose 1-diphosphate + ATP. The protein operates within amino-acid biosynthesis; L-histidine biosynthesis; L-histidine from 5-phospho-alpha-D-ribose 1-diphosphate: step 1/9. Feedback inhibited by histidine. In terms of biological role, catalyzes the condensation of ATP and 5-phosphoribose 1-diphosphate to form N'-(5'-phosphoribosyl)-ATP (PR-ATP). Has a crucial role in the pathway because the rate of histidine biosynthesis seems to be controlled primarily by regulation of HisG enzymatic activity. The chain is ATP phosphoribosyltransferase from Shewanella sp. (strain MR-7).